The following is a 35-amino-acid chain: Conotoxin Cal6.1g (35 aa).

Positions 1–8 (GLSRPSKR) are excised as a propeptide. 3 disulfide bridges follow: cysteine 9–cysteine 25, cysteine 16–cysteine 29, and cysteine 24–cysteine 34.

It belongs to the conotoxin O1 superfamily. In terms of tissue distribution, expressed by the venom duct.

It localises to the secreted. In terms of biological role, probable neurotoxin with unknown target. Possibly targets ion channels. In Californiconus californicus (California cone), this protein is Conotoxin Cal6.1g.